Here is a 382-residue protein sequence, read N- to C-terminus: Anthranilate O-methyltransferase 1 (382 aa).

S-adenosyl-L-homocysteine is bound at residue Tyr20. An anthranilate-binding site is contributed by Gln27. Residues Cys61, Asn66, Asp102, Leu103, Ser146, and Tyr147 each contribute to the S-adenosyl-L-homocysteine site. Residue Trp168 participates in anthranilate binding. Glu268 and Phe270 together coordinate Mg(2+).

The protein belongs to the methyltransferase superfamily. Type-7 methyltransferase family. SABATH subfamily.

It carries out the reaction anthranilate + S-adenosyl-L-methionine = O-methyl anthranilate + S-adenosyl-L-homocysteine. Methyltransferase involved in the biosynthesis of methyl anthranilate in response to stresses. Utilizes anthranilic acid as substrate, but not salicylic acid. Produces exclusively the O-methyl ester. This Zea mays (Maize) protein is Anthranilate O-methyltransferase 1 (AAMT1).